Consider the following 757-residue polypeptide: Cell cycle progression protein 1 (757 aa).

Over 1–217 (MSENSSDSDS…KRQFSSGLNK (217 aa)) the chain is Cytoplasmic. The interaction with MCF2L and SRC stretch occupies residues 1 to 308 (MSENSSDSDS…QKTNLATENQ (308 aa)). The tract at residues 152–207 (VFSSQPSDDESSSDETSNQPSPAFRRRRARKKTVSASESEDRLVAEQETEPSKELS) is disordered. A compositionally biased stretch (basic residues) spans 175-184 (FRRRRARKKT). Ser-186 is subject to Phosphoserine. Over residues 190-207 (SEDRLVAEQETEPSKELS) the composition is skewed to basic and acidic residues. The chain crosses the membrane as a helical; Signal-anchor for type II membrane protein span at residues 218 to 238 (CVILALVIAISMGFGHFYGTI). The Lumenal portion of the chain corresponds to 239–757 (QIQKRQQLVR…YIKPCHYSSL (519 aa)). Coiled-coil stretches lie at residues 248-272 (RKIH…QESF) and 306-450 (ENQY…LWER). Positions 458–468 (QNGKQGTDGKK) are enriched in basic and acidic residues. Residues 458–483 (QNGKQGTDGKKKGGRGSHRAKNKSKE) are disordered. The span at 469 to 479 (KGGRGSHRAKN) shows a compositional bias: basic residues. Residues 504–530 (VRHHKEKIKQAKEAVKENLKKFSDSVK) are a coiled coil.

Belongs to the CCPG1 family. As to quaternary structure, interacts with MCF2L. May interact with MCF2, ARHGEF1, BCR, VAV1 and FGD1, but not with TIAM1. Interacts with GTP-bound CDC42 and SRC.

The protein localises to the cytoplasmic granule membrane. Acts as an assembly platform for Rho protein signaling complexes. Limits guanine nucleotide exchange activity of MCF2L toward RHOA, which results in an inhibition of both its transcriptional activation ability and its transforming activity. Does not inhibit activity of MCF2L toward CDC42, or activity of MCF2 toward either RHOA or CDC42. May be involved in cell cycle regulation. This chain is Cell cycle progression protein 1 (CCPG1), found in Homo sapiens (Human).